Reading from the N-terminus, the 358-residue chain is Dual-specificity RNA methyltransferase RlmN (358 aa).

Glu91 (proton acceptor) is an active-site residue. Residues 102 to 337 (GNIRITQCLS…TILRKSKGQD (236 aa)) form the Radical SAM core domain. Residues Cys109 and Cys342 are joined by a disulfide bond. Cys116, Cys120, and Cys123 together coordinate [4Fe-4S] cluster. S-adenosyl-L-methionine contacts are provided by residues 169–170 (GE), Ser201, 223–225 (SLH), and Asn299. The active-site S-methylcysteine intermediate is Cys342.

It belongs to the radical SAM superfamily. RlmN family. It depends on [4Fe-4S] cluster as a cofactor.

The protein localises to the cytoplasm. It carries out the reaction adenosine(2503) in 23S rRNA + 2 reduced [2Fe-2S]-[ferredoxin] + 2 S-adenosyl-L-methionine = 2-methyladenosine(2503) in 23S rRNA + 5'-deoxyadenosine + L-methionine + 2 oxidized [2Fe-2S]-[ferredoxin] + S-adenosyl-L-homocysteine. The catalysed reaction is adenosine(37) in tRNA + 2 reduced [2Fe-2S]-[ferredoxin] + 2 S-adenosyl-L-methionine = 2-methyladenosine(37) in tRNA + 5'-deoxyadenosine + L-methionine + 2 oxidized [2Fe-2S]-[ferredoxin] + S-adenosyl-L-homocysteine. Specifically methylates position 2 of adenine 2503 in 23S rRNA and position 2 of adenine 37 in tRNAs. m2A2503 modification seems to play a crucial role in the proofreading step occurring at the peptidyl transferase center and thus would serve to optimize ribosomal fidelity. The chain is Dual-specificity RNA methyltransferase RlmN from Lawsonia intracellularis (strain PHE/MN1-00).